Reading from the N-terminus, the 196-residue chain is 7-methyl-GTP pyrophosphatase (196 aa).

The active-site Proton acceptor is the Asp-72.

Belongs to the Maf family. YceF subfamily. Requires a divalent metal cation as cofactor.

It is found in the cytoplasm. The enzyme catalyses N(7)-methyl-GTP + H2O = N(7)-methyl-GMP + diphosphate + H(+). In terms of biological role, nucleoside triphosphate pyrophosphatase that hydrolyzes 7-methyl-GTP (m(7)GTP). May have a dual role in cell division arrest and in preventing the incorporation of modified nucleotides into cellular nucleic acids. This Neisseria meningitidis serogroup B (strain ATCC BAA-335 / MC58) protein is 7-methyl-GTP pyrophosphatase.